Here is an 83-residue protein sequence, read N- to C-terminus: Large ribosomal subunit protein bL27 (83 aa).

Residues Met1–Val25 are disordered.

This sequence belongs to the bacterial ribosomal protein bL27 family.

This Chlamydia trachomatis serovar L2 (strain ATCC VR-902B / DSM 19102 / 434/Bu) protein is Large ribosomal subunit protein bL27.